We begin with the raw amino-acid sequence, 201 residues long: Holliday junction resolvase RecU (201 aa).

Residues threonine 87, aspartate 89, aspartate 102, and glutamine 121 each contribute to the Mg(2+) site.

This sequence belongs to the RecU family. Mg(2+) is required as a cofactor.

Its subcellular location is the cytoplasm. The catalysed reaction is Endonucleolytic cleavage at a junction such as a reciprocal single-stranded crossover between two homologous DNA duplexes (Holliday junction).. Endonuclease that resolves Holliday junction intermediates in genetic recombination. Cleaves mobile four-strand junctions by introducing symmetrical nicks in paired strands. Promotes annealing of linear ssDNA with homologous dsDNA. Required for DNA repair, homologous recombination and chromosome segregation. This chain is Holliday junction resolvase RecU, found in Levilactobacillus brevis (strain ATCC 367 / BCRC 12310 / CIP 105137 / JCM 1170 / LMG 11437 / NCIMB 947 / NCTC 947) (Lactobacillus brevis).